The following is a 172-amino-acid chain: Translation initiation factor IF-3 (172 aa).

Belongs to the IF-3 family. As to quaternary structure, monomer.

It localises to the cytoplasm. IF-3 binds to the 30S ribosomal subunit and shifts the equilibrium between 70S ribosomes and their 50S and 30S subunits in favor of the free subunits, thus enhancing the availability of 30S subunits on which protein synthesis initiation begins. This is Translation initiation factor IF-3 from Bartonella tribocorum (strain CIP 105476 / IBS 506).